The sequence spans 71 residues: Protein PSY2 (71 aa).

The N-terminal stretch at 1–20 (MSFGTRLLLFLILTLPLVTS) is a signal peptide. Residues 21–46 (SSPNTLHVSGIVKTGTTSRFLMMTIE) constitute a propeptide that is removed on maturation. Tyrosine 48 is subject to Sulfotyrosine. The tract at residues 50–71 (DPSANTRHDPSVPTNAKADTTP) is disordered. Residues 61 to 71 (VPTNAKADTTP) are compositionally biased toward polar residues. A 4-hydroxyproline modification is found at proline 62. Proline 62 is a glycosylation site (O-linked (Ara...) hydroxyproline). A propeptide spanning residues 65 to 71 (AKADTTP) is cleaved from the precursor.

It belongs to the sulfated-peptide plant hormone family. Post-translationally, the sulfation and the glycosylation are required for full activity.

Its subcellular location is the secreted. Promotes cellular proliferation and expansion. In Arabidopsis thaliana (Mouse-ear cress), this protein is Protein PSY2 (PSY2).